A 509-amino-acid polypeptide reads, in one-letter code: FAD-linked oxidoreductase anuG (509 aa).

The signal sequence occupies residues 1–21 (MVQISNVWGFGLAIMASLAAA). The FAD-binding PCMH-type domain maps to 75-246 (YAAPKFTVVV…TSFEMSIYPT (172 aa)).

This sequence belongs to the oxygen-dependent FAD-linked oxidoreductase family. FAD serves as cofactor.

It catalyses the reaction (2S,9S)-annullatin H + 2 A = (2S,9S)-annullatin D + 2 AH2. It participates in secondary metabolite biosynthesis. Functionally, cytochrome P450 monooxygenase; part of the gene cluster that mediates the biosynthesis of annullatin D, an alkylated aromatic polyketide with a fused dihydrobenzofuran lactone ring system that exhibits potent agonistic activities toward the cannabinoid receptors. Within the pathway, anuG is responsible for the five-member lactone ring formation in (2S, 9S)-annullatin D via oxidative lactonization between the two hydroxyl groups. The annullatin backbone 2-hydroxymethyl-3-pentylphenol is assembled from one acetyl-CoA starter unit and 5 malonyl-CoA elongation units by cooperation of the highly reducing polyketide synthase anuA, the short-chain dehydrogenase anuB and the oxidoreductase anuC, before being hydroxylated at the C-5 alkyl chain by the cytochrome P450 monooxygenase anuE to form (8S)-annullatin E. The prenyltransferase anuH subsequently installs one isoprenyl group at the benzene ring to form (8S)-annullatin J. Enzymatic or nonenzymatic dihydro-benzofuran ring formation between the prenyl and the phenolic hydroxyl groups in (8S)-annullatin J results in two diastereomers (2S,9S)-annullatin H and compound 12. The intermediate (2S,9S)-annullatin H is then converted to (2S,9S)-annullatin D by the FAD-linked oxidoreductase anuG-catalyzed five-member lactone ring formation. The isomer 12 acts as a substrate for the short-chain dehydrogenase anuF and is oxidized to (2R)-annullatin F, which is subsequently acetylated by an acetyltransferase leading to (2R)-annullatin G formation. The remaining enzymes identified within the cluster, anuD, anuI and anuJ, seem not to be involved in annullatin biosynthesis. In Penicillium roqueforti (strain FM164), this protein is FAD-linked oxidoreductase anuG.